The primary structure comprises 169 residues: Capsid protein (169 aa).

This sequence belongs to the nanoviridae capsid protein family.

It localises to the virion. This is Capsid protein (DNA-S) from Subterranean clover stunt virus (strain F) (SCSV).